Here is a 128-residue protein sequence, read N- to C-terminus: MTRSAMQMGRLTLVLCLLLLLLLTTQACFIRNCPKGGKRDVDERYLFKACMSCSFGQCVGPRICCGPRGCEMGTAEANRCIEEDEDPIPCQVVGQHCDLNNPGNIHGNCVANGICCVDDTCTIHTGCL.

The N-terminal stretch at 1-27 is a signal peptide; that stretch reads MTRSAMQMGRLTLVLCLLLLLLLTTQA. The cysteines at positions 28 and 33 are disulfide-linked. A Glycine amide modification is found at glycine 36. Positions 37–44 are excised as a propeptide; that stretch reads GKRDVDER. Disulfide bonds link cysteine 50–cysteine 90, cysteine 53–cysteine 64, cysteine 58–cysteine 80, cysteine 65–cysteine 70, cysteine 97–cysteine 115, cysteine 109–cysteine 127, and cysteine 116–cysteine 121.

This sequence belongs to the vasopressin/oxytocin family. In terms of tissue distribution, expressed by the venom gland.

Its subcellular location is the secreted. Targets vasopressin-oxytocin related receptors. Is more active on fish receptors than on their human counterparts, supporting an evolved role of this conopressin in the envenomation process. Acts as an agonist on zebrafish vasopressin receptors V1a1R (EC(50)=10.6 nM), V1a2R (EC(50)=44.06 nM, partial agonist), V2R (EC(50)=299.2 nM) and oxytocin receptor (EC(50)=353.73 nM, partial agonist). Shows a weaker activity on human receptors AVPR1B (EC(50)=51.92 nM), AVPR1A (EC(50)=123.78 nM), AVPR2 (EC(50)=299.2 nM) and oxytocin (OXTR) receptor (EC(50)=455.66 nM, partial agonist). In vivo, exhibits grooming and scratching behavior in mice, following intracerebral injection. This is Conopressin-conophysin from Conus geographus (Geography cone).